The chain runs to 201 residues: Dephospho-CoA kinase (201 aa).

The DPCK domain occupies 7 to 201 (AIALSGGIGT…IETIKKDFHV (195 aa)). Residue 15–20 (GTGKST) coordinates ATP.

This sequence belongs to the CoaE family.

It is found in the cytoplasm. The enzyme catalyses 3'-dephospho-CoA + ATP = ADP + CoA + H(+). Its pathway is cofactor biosynthesis; coenzyme A biosynthesis; CoA from (R)-pantothenate: step 5/5. In terms of biological role, catalyzes the phosphorylation of the 3'-hydroxyl group of dephosphocoenzyme A to form coenzyme A. The sequence is that of Dephospho-CoA kinase from Wolinella succinogenes (strain ATCC 29543 / DSM 1740 / CCUG 13145 / JCM 31913 / LMG 7466 / NCTC 11488 / FDC 602W) (Vibrio succinogenes).